Consider the following 248-residue polypeptide: MRSLSLFTALLAGQAFAYPKPVLQSSTRRDWPTINEFLTELAEIMPIGDTVSAACDLIGDAEDVAADLFDISNTENDACGDVTVLFARGTCDPGNVGVLVGPWFFNSLETALPNKKVGVKGVPYPASVQGFLSGSVQPGIDMANQIKSVISSCPNTKLVLGGYSQGSMVVHNAASNLDAATMAKVSAVVLFGDPYDGRPVANYDASKVLVVCHDGDNICQGGDFILLPHLTYAEDADTAAAFVKPLVS.

The N-terminal stretch at 1–17 (MRSLSLFTALLAGQAFA) is a signal peptide. Cysteine 79 and cysteine 153 are disulfide-bonded. Serine 164 serves as the catalytic Nucleophile. A disulfide bridge connects residues cysteine 212 and cysteine 219. The active site involves aspartate 216. The active-site Proton donor/acceptor is the histidine 229.

It belongs to the cutinase family. In terms of processing, the 2 disulfide bonds play a critical role in holding the catalytic residues in juxta-position; reduction of the disulfide bridges results in the complete inactivation of the enzyme.

Its subcellular location is the secreted. The enzyme catalyses cutin + H2O = cutin monomers.. Catalyzes the hydrolysis of complex carboxylic polyesters found in the cell wall of plants. May degrade cutin, a macromolecule that forms the structure of the plant cuticle. May also degrade suberin, a specialized macromolecule found in the cell wall of various plant tissues. This chain is Cutinase cut1, found in Trichoderma harzianum (Hypocrea lixii).